Here is a 67-residue protein sequence, read N- to C-terminus: Alpha-conotoxin-like Qc1.1b (67 aa).

Residues 1–21 (MGMRMMFTMFLLVVLAITVVS) form the signal peptide. Residues 22–46 (FTSDHASDGRNTAANDKASKLMALR) constitute a propeptide that is removed on maturation. 2 disulfide bridges follow: Cys49/Cys55 and Cys50/Cys63. The tract at residues 51 to 53 (DNP) is lacks the Ser-Xaa-Pro motif that is crucial for potent interaction with nAChR.

Belongs to the conotoxin A superfamily. As to expression, expressed by the venom duct.

It localises to the secreted. In terms of biological role, alpha-conotoxins act on postsynaptic membranes, they bind to the nicotinic acetylcholine receptors (nAChR) and thus inhibit them. Has possibly a distinct nAChR binding mode from other alpha-conotoxins, due to a different three residue motif (lacks the Ser-Xaa-Pro motif). This is Alpha-conotoxin-like Qc1.1b from Conus quercinus (Oak cone).